An 810-amino-acid chain; its full sequence is Probable dehydratase YbiW (810 aa).

Residues 11–682 enclose the PFL domain; it reads DRIKAHKNAL…QTMATPDGRK (672 aa). The segment at 677 to 699 is disordered; sequence TPDGRKAHTPLAEGASPASGTDH. The Glycine radical domain maps to 689-810; sequence EGASPASGTD…DIIARTEHML (122 aa). The residue at position 786 (G786) is a Glycine radical.

This sequence belongs to the glycyl radical enzyme (GRE) family.

Its function is as follows. Probably shows dehydratase activity. This chain is Probable dehydratase YbiW (ybiW), found in Escherichia coli (strain K12).